The following is a 333-amino-acid chain: uncharacterized protein (333 aa).

It to E.coli YfeH.

This is an uncharacterized protein from Pseudomonas aeruginosa (strain ATCC 15692 / DSM 22644 / CIP 104116 / JCM 14847 / LMG 12228 / 1C / PRS 101 / PAO1).